Consider the following 244-residue polypeptide: Phosphoadenosine 5'-phosphosulfate reductase (244 aa).

The active-site Nucleophile; cysteine thiosulfonate intermediate is C239.

The protein belongs to the PAPS reductase family. CysH subfamily.

It is found in the cytoplasm. The enzyme catalyses [thioredoxin]-disulfide + sulfite + adenosine 3',5'-bisphosphate + 2 H(+) = [thioredoxin]-dithiol + 3'-phosphoadenylyl sulfate. Its pathway is sulfur metabolism; hydrogen sulfide biosynthesis; sulfite from sulfate: step 3/3. Its function is as follows. Catalyzes the formation of sulfite from phosphoadenosine 5'-phosphosulfate (PAPS) using thioredoxin as an electron donor. In Enterobacter sp. (strain 638), this protein is Phosphoadenosine 5'-phosphosulfate reductase.